We begin with the raw amino-acid sequence, 375 residues long: Succinyl-diaminopimelate desuccinylase (375 aa).

Histidine 66 is a binding site for Zn(2+). Residue aspartate 68 is part of the active site. A Zn(2+)-binding site is contributed by aspartate 99. Glutamate 133 functions as the Proton acceptor in the catalytic mechanism. 3 residues coordinate Zn(2+): glutamate 134, glutamate 162, and histidine 348.

It belongs to the peptidase M20A family. DapE subfamily. Homodimer. The cofactor is Zn(2+). Requires Co(2+) as cofactor.

It catalyses the reaction N-succinyl-(2S,6S)-2,6-diaminopimelate + H2O = (2S,6S)-2,6-diaminopimelate + succinate. The protein operates within amino-acid biosynthesis; L-lysine biosynthesis via DAP pathway; LL-2,6-diaminopimelate from (S)-tetrahydrodipicolinate (succinylase route): step 3/3. Catalyzes the hydrolysis of N-succinyl-L,L-diaminopimelic acid (SDAP), forming succinate and LL-2,6-diaminopimelate (DAP), an intermediate involved in the bacterial biosynthesis of lysine and meso-diaminopimelic acid, an essential component of bacterial cell walls. The chain is Succinyl-diaminopimelate desuccinylase from Yersinia pseudotuberculosis serotype O:1b (strain IP 31758).